Reading from the N-terminus, the 310-residue chain is MSGGLDILQLKEEDVVKFLAAGVHLGANNCDFQMEDYVYKRKSDGVNIINVKKTWEKLLLAARIIVTIENPADVCVISARPYGQRAILKYASHTGATPIAGRFTPGTFTNQIQAAFREPRLLIVCDPRIDHQPVTEASYVNIPVIAFCNTDSPLRHVDVAIPCNNKGIHSIGLMFWLLAREVLRMRGSISRALPWEIMPDLYFYRDPEEAEKEEQAALARQQEEANAGTTAGFSEWGGAAPWGADPMATAGIAPTIPAPFAATTPAVSADWDSVAPGATDDWGAEPAAPSSDWGTAVTMQEQAKPSTDWA.

2 disordered regions span residues 213 to 240 and 271 to 310; these read EEQA…GGAA and WDSV…TDWA. Residues 216–227 show a composition bias toward low complexity; it reads AALARQQEEANA. Residues 297–310 show a composition bias toward polar residues; that stretch reads VTMQEQAKPSTDWA.

This sequence belongs to the universal ribosomal protein uS2 family. As to quaternary structure, component of the small ribosomal subunit. Mature ribosomes consist of a small (40S) and a large (60S) subunit. The 40S subunit contains about 33 different proteins and 1 molecule of RNA (18S). The 60S subunit contains about 49 different proteins and 3 molecules of RNA (28S, 5.8S and 5S). Interacts with ribosomal protein S21.

The protein resides in the cytoplasm. Its function is as follows. Required for the assembly and/or stability of the 40S ribosomal subunit. Required for the processing of the 20S rRNA-precursor to mature 18S rRNA in a late step of the maturation of 40S ribosomal subunits. This chain is Small ribosomal subunit protein uS2, found in Nematostella vectensis (Starlet sea anemone).